Here is a 208-residue protein sequence, read N- to C-terminus: Fibroblast growth factor-binding protein 2 (208 aa).

Positions 1 to 19 are cleaved as a signal peptide; that stretch reads MKRVALLFLVVICGMGGLG. 3 cysteine pairs are disulfide-bonded: Cys43–Cys59, Cys68–Cys102, and Cys77–Cys113. Residues 130-181 are disordered; sequence EPEDGANRDKSSQKTSASVRGAGKSSVKKTGKPAVLPRIKPTQHGQGSENET. Cysteines 191 and 199 form a disulfide.

Belongs to the fibroblast growth factor-binding protein family.

It is found in the secreted. The protein resides in the extracellular space. The chain is Fibroblast growth factor-binding protein 2 (FGFBP2) from Gallus gallus (Chicken).